Here is a 220-residue protein sequence, read N- to C-terminus: 5'(3')-deoxyribonucleotidase, mitochondrial (220 aa).

The N-terminal 23 residues, 1–23 (MHRLRGCCARPRGAPLRAERSRA), are a transit peptide targeting the mitochondrion. The active-site Nucleophile is the aspartate 33. Aspartate 33 and aspartate 35 together coordinate Mg(2+). The active-site Proton donor is aspartate 35. Substrate is bound by residues aspartate 35, phenylalanine 41, phenylalanine 67, tryptophan 68, valine 69, tryptophan 88, threonine 122, and lysine 157. Aspartate 168 provides a ligand contact to Mg(2+).

It belongs to the 5'(3')-deoxyribonucleotidase family. In terms of assembly, homodimer. Mg(2+) serves as cofactor.

It localises to the mitochondrion. Its function is as follows. Dephosphorylates specifically the 5' and 2'(3')-phosphates of uracil and thymine deoxyribonucleotides, and so protects mitochondrial DNA replication from excess dTTP. Has only marginal activity towards dIMP and dGMP. The protein is 5'(3')-deoxyribonucleotidase, mitochondrial (Nt5m) of Mus musculus (Mouse).